We begin with the raw amino-acid sequence, 126 residues long: Small nuclear ribonucleoprotein Sm D3 (126 aa).

An N-acetylserine modification is found at S2. The Sm domain occupies V5–L77. Tandem repeats lie at residues R110 to G111, R112 to G113, R114 to G115, M116 to G117, and R118 to G119. The 5 X 2 AA tandem repeats of [RM]-G; required for interaction with SMN1 stretch occupies residues R110–G119.

The protein belongs to the snRNP core protein family. In terms of assembly, core component of the spliceosomal U1, U2, U4 and U5 small nuclear ribonucleoproteins (snRNPs), the building blocks of the spliceosome. Most spliceosomal snRNPs contain a common set of Sm proteins, SNRPB, SNRPD1, SNRPD2, SNRPD3, SNRPE, SNRPF and SNRPG that assemble in a heptameric protein ring on the Sm site of the small nuclear RNA to form the core snRNP. Component of the U1 snRNP. The U1 snRNP is composed of the U1 snRNA and the 7 core Sm proteins SNRPB, SNRPD1, SNRPD2, SNRPD3, SNRPE, SNRPF and SNRPG, and at least three U1 snRNP-specific proteins SNRNP70/U1-70K, SNRPA/U1-A and SNRPC/U1-C. Component of the U4/U6-U5 tri-snRNP complex composed of the U4, U6 and U5 snRNAs and at least PRPF3, PRPF4, PRPF6, PRPF8, PRPF31, SNRNP200, TXNL4A, SNRNP40, SNRPB, SNRPD1, SNRPD2, SNRPD3, SNRPE, SNRPF, SNRPG, DDX23, CD2BP2, PPIH, SNU13, EFTUD2, SART1 and USP39, plus LSM2, LSM3, LSM4, LSM5, LSM6, LSM7 and LSM8. Component of the U7 snRNP complex, or U7 Sm protein core complex, that is composed of the U7 snRNA and at least LSM10, LSM11, SNRPB, SNRPD3, SNRPE, SNRPF and SNRPG; the complex does not contain SNRPD1 and SNRPD2. Component of the minor spliceosome, which splices U12-type introns. Part of the SMN-Sm complex that contains SMN1, GEMIN2/SIP1, DDX20/GEMIN3, GEMIN4, GEMIN5, GEMIN6, GEMIN7, GEMIN8, STRAP/UNRIP and the Sm proteins SNRPB, SNRPD1, SNRPD2, SNRPD3, SNRPE, SNRPF and SNRPG; catalyzes core snRNPs assembly. Forms a 6S pICln-Sm complex composed of CLNS1A/pICln, SNRPD1, SNRPD2, SNRPE, SNRPF and SNRPG; ring-like structure where CLNS1A/pICln mimics additional Sm proteins and which is unable to assemble into the core snRNP. Interacts (via C-terminus) with SMN1 (via Tudor domain); the interaction is direct. In terms of processing, methylated on arginine residues by PRMT5 and PRMT7; probable asymmetric dimethylation which is required for assembly and biogenesis of snRNPs.

It is found in the cytoplasm. It localises to the cytosol. The protein localises to the nucleus. Plays a role in pre-mRNA splicing as a core component of the spliceosomal U1, U2, U4 and U5 small nuclear ribonucleoproteins (snRNPs), the building blocks of the spliceosome. Component of both the pre-catalytic spliceosome B complex and activated spliceosome C complexes. As a component of the minor spliceosome, involved in the splicing of U12-type introns in pre-mRNAs. As part of the U7 snRNP it is involved in histone pre-mRNA 3'-end processing. This is Small nuclear ribonucleoprotein Sm D3 (SNRPD3) from Homo sapiens (Human).